The following is a 251-amino-acid chain: UPF0309 protein GK1441 (251 aa).

Residues 31–214 (VSEAIQNGGI…VLMAENGIEP (184 aa)) form the SIS domain.

This sequence belongs to the UPF0309 family.

This chain is UPF0309 protein GK1441, found in Geobacillus kaustophilus (strain HTA426).